The chain runs to 339 residues: Cytochrome c biogenesis protein CcsA (339 aa).

Helical transmembrane passes span 6–26 (LEHI…LVFW), 37–57 (IGSL…GLLL), 71–91 (LYES…VSEI), 97–117 (WLGI…TVGL), 142–162 (MMIP…ALLI), 247–267 (IISL…VWVN), and 281–299 (TWAL…IRMI).

This sequence belongs to the CcmF/CycK/Ccl1/NrfE/CcsA family. In terms of assembly, may interact with Ccs1.

It localises to the plastid. The protein resides in the chloroplast thylakoid membrane. In terms of biological role, required during biogenesis of c-type cytochromes (cytochrome c6 and cytochrome f) at the step of heme attachment. This chain is Cytochrome c biogenesis protein CcsA, found in Anthoceros angustus (Hornwort).